Here is a 183-residue protein sequence, read N- to C-terminus: MNQPSKAPRAPRSSAATPKNKKKSRAELDQEAREHKRAKKRRGLASGSRTQVESTNQKNKAAAQAKDPRIGSKVPVALVVEDKPKAKPQPKPKAEAKPKPRLTPEEELAKLENDERLDALLDRIDDGETLSAEDQKYVDQTLDRIDALMEQLGIELGDDDEEEEEKREDILKLLKGGNPKDVI.

Positions 1–18 are enriched in low complexity; it reads MNQPSKAPRAPRSSAATP. The tract at residues 1-114 is disordered; it reads MNQPSKAPRA…EEELAKLEND (114 aa). A compositionally biased stretch (basic and acidic residues) spans 25–34; that stretch reads RAELDQEARE. Positions 56–65 are enriched in low complexity; the sequence is NQKNKAAAQA. Residues 92-114 are compositionally biased toward basic and acidic residues; that stretch reads PKAEAKPKPRLTPEEELAKLEND.

It belongs to the YihI family. Interacts with Der.

In terms of biological role, a GTPase-activating protein (GAP) that modifies Der/EngA GTPase function. May play a role in ribosome biogenesis. This Serratia proteamaculans (strain 568) protein is Der GTPase-activating protein YihI.